A 191-amino-acid chain; its full sequence is Transcription factor E (191 aa).

The HTH TFE/IIEalpha-type domain maps to arginine 4–proline 87. Residues alanine 170–lysine 191 form a disordered region. Positions lysine 174–lysine 191 are enriched in basic residues.

The protein belongs to the TFE family. Monomer. Interaction with RNA polymerase subunits RpoF and RpoE is necessary for Tfe stimulatory transcription activity. Able to interact with Tbp and RNA polymerase in the absence of DNA promoter. Interacts both with the preinitiation and elongation complexes.

In terms of biological role, transcription factor that plays a role in the activation of archaeal genes transcribed by RNA polymerase. Facilitates transcription initiation by enhancing TATA-box recognition by TATA-box-binding protein (Tbp), and transcription factor B (Tfb) and RNA polymerase recruitment. Not absolutely required for transcription in vitro, but particularly important in cases where Tbp or Tfb function is not optimal. It dynamically alters the nucleic acid-binding properties of RNA polymerases by stabilizing the initiation complex and destabilizing elongation complexes. Seems to translocate with the RNA polymerase following initiation and acts by binding to the non template strand of the transcription bubble in elongation complexes. This is Transcription factor E from Pyrococcus horikoshii (strain ATCC 700860 / DSM 12428 / JCM 9974 / NBRC 100139 / OT-3).